A 152-amino-acid polypeptide reads, in one-letter code: Superoxide dismutase [Cu-Zn] 5 (152 aa).

Histidine 44, histidine 46, and histidine 61 together coordinate Cu cation. A disulfide bridge links cysteine 55 with cysteine 144. The Zn(2+) site is built by histidine 61, histidine 69, histidine 78, and aspartate 81. Histidine 118 serves as a coordination point for Cu cation.

The protein belongs to the Cu-Zn superoxide dismutase family. Requires Cu cation as cofactor. Zn(2+) serves as cofactor.

It catalyses the reaction 2 superoxide + 2 H(+) = H2O2 + O2. Functionally, destroys radicals which are normally produced within the cells and which are toxic to biological systems. This is Superoxide dismutase [Cu-Zn] 5 (sodE) from Dictyostelium discoideum (Social amoeba).